The following is a 116-amino-acid chain: Ribonuclease P protein component (116 aa).

Belongs to the RnpA family. As to quaternary structure, consists of a catalytic RNA component (M1 or rnpB) and a protein subunit.

It carries out the reaction Endonucleolytic cleavage of RNA, removing 5'-extranucleotides from tRNA precursor.. RNaseP catalyzes the removal of the 5'-leader sequence from pre-tRNA to produce the mature 5'-terminus. It can also cleave other RNA substrates such as 4.5S RNA. The protein component plays an auxiliary but essential role in vivo by binding to the 5'-leader sequence and broadening the substrate specificity of the ribozyme. The polypeptide is Ribonuclease P protein component (Pseudanabaena sp. (strain PCC 6903)).